Reading from the N-terminus, the 116-residue chain is CDKN2AIP N-terminal-like protein (116 aa).

N-acetylmethionine is present on Met-1. An XRN2-binding (XTBD) domain is found at 24–116 (AEQFRSYSES…RSELMKKHQS (93 aa)).

This sequence belongs to the CARF family. Interacts with XRN2; the interaction is direct.

This Homo sapiens (Human) protein is CDKN2AIP N-terminal-like protein (CDKN2AIPNL).